Reading from the N-terminus, the 115-residue chain is Large ribosomal subunit protein bL19 (115 aa).

It belongs to the bacterial ribosomal protein bL19 family.

Its function is as follows. This protein is located at the 30S-50S ribosomal subunit interface and may play a role in the structure and function of the aminoacyl-tRNA binding site. This is Large ribosomal subunit protein bL19 from Oleidesulfovibrio alaskensis (strain ATCC BAA-1058 / DSM 17464 / G20) (Desulfovibrio alaskensis).